Here is a 118-residue protein sequence, read N- to C-terminus: uncharacterized protein (118 aa).

The next 3 helical transmembrane spans lie at 22–44 (IIAS…FSIA), 54–71 (LSPL…PVLR), and 78–99 (PILS…VEWL).

The protein localises to the cell membrane. This is an uncharacterized protein from Archaeoglobus fulgidus (strain ATCC 49558 / DSM 4304 / JCM 9628 / NBRC 100126 / VC-16).